We begin with the raw amino-acid sequence, 604 residues long: Kinesin-like protein KIN-14O (604 aa).

Residues 22–61 (MLNHDKDISALQEEISALRSRQRHLDHRRQEALDKLIDLK) are a coiled coil. The Kinesin motor domain maps to 63–387 (SIRVFCRVRP…LSFAKRARSI (325 aa)). Residue 141-148 (GQTGTGKT) coordinates ATP. Residues 383-443 (RARSIESSKE…EERKKLSSSA (61 aa)) adopt a coiled-coil conformation. Disordered stretches follow at residues 465–511 (DSAE…KTRL) and 565–604 (SNNS…SSLT). The span at 565 to 574 (SNNSIDSTAA) shows a compositional bias: polar residues. Over residues 593–604 (LHQHRRRMSSLT) the composition is skewed to basic residues.

Belongs to the TRAFAC class myosin-kinesin ATPase superfamily. Kinesin family. KIN-14 subfamily.

The protein is Kinesin-like protein KIN-14O of Oryza sativa subsp. japonica (Rice).